The chain runs to 280 residues: 2-dehydro-3-deoxyphosphooctonate aldolase (280 aa).

This sequence belongs to the KdsA family.

Its subcellular location is the cytoplasm. It catalyses the reaction D-arabinose 5-phosphate + phosphoenolpyruvate + H2O = 3-deoxy-alpha-D-manno-2-octulosonate-8-phosphate + phosphate. The protein operates within carbohydrate biosynthesis; 3-deoxy-D-manno-octulosonate biosynthesis; 3-deoxy-D-manno-octulosonate from D-ribulose 5-phosphate: step 2/3. Its pathway is bacterial outer membrane biogenesis; lipopolysaccharide biosynthesis. This Nitrosococcus oceani (strain ATCC 19707 / BCRC 17464 / JCM 30415 / NCIMB 11848 / C-107) protein is 2-dehydro-3-deoxyphosphooctonate aldolase.